The chain runs to 196 residues: Peroxiredoxin TSA1-B (196 aa).

One can recognise a Thioredoxin domain in the interval 3 to 161 (PVVQQPAPSF…SLRLLEAFQF (159 aa)). 45-47 (TFV) serves as a coordination point for substrate. Cys-48 serves as the catalytic Cysteine sulfenic acid (-SOH) intermediate. Arg-124 is a binding site for substrate. The interval 173–196 (WHPGDETIKPSPEASKEYFNKVNK) is disordered. Residues 175–196 (PGDETIKPSPEASKEYFNKVNK) show a composition bias toward basic and acidic residues.

Belongs to the peroxiredoxin family. AhpC/Prx1 subfamily. As to quaternary structure, homodimer; disulfide-linked, upon oxidation.

The protein resides in the cell surface. It is found in the nucleus. The protein localises to the cytoplasm. The catalysed reaction is a hydroperoxide + [thioredoxin]-dithiol = an alcohol + [thioredoxin]-disulfide + H2O. Thiol-specific peroxidase that catalyzes the reduction of hydrogen peroxide and organic hydroperoxides to water and alcohols, respectively. Plays a role in cell protection against oxidative stress by detoxifying peroxides and as sensor of hydrogen peroxide-mediated signaling events. Also involved in the correct composition of the hyphal cell wall. The protein is Peroxiredoxin TSA1-B of Candida albicans (strain SC5314 / ATCC MYA-2876) (Yeast).